The chain runs to 397 residues: Na(+)/H(+) antiporter NhaA 2 (397 aa).

11 helical membrane passes run 9 to 29 (LHNP…AMAV), 59 to 79 (LLLW…GLEL), 95 to 115 (ILPV…YTLI), 125 to 145 (GWAI…ALLG), 154 to 174 (LFLL…IAFF), 177 to 197 (SELS…LILM), 222 to 242 (SGVH…LKGE), 260 to 280 (VVGL…SLQG), 292 to 312 (LGIA…FVWL), 332 to 352 (GVAL…SLAF), and 371 to 391 (LGIL…LRFS).

This sequence belongs to the NhaA Na(+)/H(+) (TC 2.A.33) antiporter family.

The protein localises to the cell inner membrane. The enzyme catalyses Na(+)(in) + 2 H(+)(out) = Na(+)(out) + 2 H(+)(in). Functionally, na(+)/H(+) antiporter that extrudes sodium in exchange for external protons. This Magnetococcus marinus (strain ATCC BAA-1437 / JCM 17883 / MC-1) protein is Na(+)/H(+) antiporter NhaA 2.